The primary structure comprises 268 residues: tRNA pseudouridine synthase A (268 aa).

Asp52 functions as the Nucleophile in the catalytic mechanism. Tyr110 serves as a coordination point for substrate.

This sequence belongs to the tRNA pseudouridine synthase TruA family. In terms of assembly, homodimer.

It carries out the reaction uridine(38/39/40) in tRNA = pseudouridine(38/39/40) in tRNA. Its function is as follows. Formation of pseudouridine at positions 38, 39 and 40 in the anticodon stem and loop of transfer RNAs. The protein is tRNA pseudouridine synthase A of Prochlorococcus marinus (strain AS9601).